The primary structure comprises 708 residues: Transcriptional regulator nsrM (708 aa).

The zn(2)-C6 fungal-type DNA-binding region spans 37 to 63; it reads CVRCQQRKVRCDHKSPCGNCVASDSQC.

Its subcellular location is the nucleus. Transcriptional regulator; part of the gene cluster that mediates the biosynthesis of the tetrahydroxanthone dimer neosartorin, which exhibits antibacterial activity. The polypeptide is Transcriptional regulator nsrM (Aspergillus novofumigatus (strain IBT 16806)).